The sequence spans 575 residues: Interleukin-10 receptor subunit alpha (575 aa).

The N-terminal stretch at 1 to 16 is a signal peptide; the sequence is MLSRLLPFLVTISSLS. Residues 17-241 lie on the Extracellular side of the membrane; sequence LEFIAYGTEL…QYFTVTNLSI (225 aa). N-linked (GlcNAc...) asparagine glycans are attached at residues Asn50, Asn66, Asn113, and Asn182. Residues Cys204 and Cys225 are joined by a disulfide bond. N-linked (GlcNAc...) asparagine glycosylation occurs at Asn238. Residues 242–262 traverse the membrane as a helical segment; that stretch reads LVISMLLFCGILVCLVLQWYI. Residues 263–575 lie on the Cytoplasmic side of the membrane; that stretch reads RHPGKLPTVL…PLISSLQVEE (313 aa). 2 positions are modified to phosphotyrosine: Tyr443 and Tyr493.

The protein belongs to the type II cytokine receptor family. Interacts with IL10. Interacts with IL10RB. Interacts (via its cytoplasmic domain) with JAK1 (via N-terminus). Interacts with BTRC; this interaction leads to IL10RA ubiquitination and subsequent degradation. Interacts with STAT3. Post-translationally, phosphorylated. Phosphorylation of the cytoplasmic tail induced STAT3 activation. In terms of processing, ubiquitinated by BTRC; ubiquitination leads to endocytosis and subsequent degradation of IL10RA.

The protein resides in the cell membrane. The protein localises to the cytoplasm. Cell surface receptor for the cytokine IL10 that participates in IL10-mediated anti-inflammatory functions, limiting excessive tissue disruption caused by inflammation. Upon binding to IL10, induces a conformational change in IL10RB, allowing IL10RB to bind IL10 as well. In turn, the heterotetrameric assembly complex, composed of two subunits of IL10RA and IL10RB, activates the kinases JAK1 and TYK2 that are constitutively associated with IL10RA and IL10RB respectively. These kinases then phosphorylate specific tyrosine residues in the intracellular domain in IL10RA leading to the recruitment and subsequent phosphorylation of STAT3. Once phosphorylated, STAT3 homodimerizes, translocates to the nucleus and activates the expression of anti-inflammatory genes. In addition, IL10RA-mediated activation of STAT3 inhibits starvation-induced autophagy. This chain is Interleukin-10 receptor subunit alpha (Il10ra), found in Mus musculus (Mouse).